The primary structure comprises 159 residues: Phosphopantetheine adenylyltransferase (159 aa).

Threonine 9 serves as a coordination point for substrate. ATP is bound by residues 9 to 10 and histidine 17; that span reads TF. Residues lysine 41, leucine 73, and arginine 87 each coordinate substrate. ATP is bound by residues 88 to 90, glutamate 98, and 123 to 129; these read GLR and YSFISST.

It belongs to the bacterial CoaD family. In terms of assembly, homohexamer. It depends on Mg(2+) as a cofactor.

It localises to the cytoplasm. The enzyme catalyses (R)-4'-phosphopantetheine + ATP + H(+) = 3'-dephospho-CoA + diphosphate. It participates in cofactor biosynthesis; coenzyme A biosynthesis; CoA from (R)-pantothenate: step 4/5. Its function is as follows. Reversibly transfers an adenylyl group from ATP to 4'-phosphopantetheine, yielding dephospho-CoA (dPCoA) and pyrophosphate. The polypeptide is Phosphopantetheine adenylyltransferase (Pseudomonas syringae pv. syringae (strain B728a)).